A 206-amino-acid polypeptide reads, in one-letter code: MNNEDKKLQDEQLQKETVEAAETVSAEEEFVEITAEEMQIARIAELEAALLSSDAKVKEAQDNVLRARAEGENVRRRSEVEIDKARKFALNKFTEELLPVIDNLERAIETADKNDEALKSMIEGVELTLKTMTATVEKFGLKQHNPVGEVFNPEFHQAMSIQESADHEPNTVMLVMQKGYELNGRIIRPAMVMVSKAAAGSVDMQA.

The span at 1–18 (MNNEDKKLQDEQLQKETV) shows a compositional bias: basic and acidic residues. A disordered region spans residues 1-21 (MNNEDKKLQDEQLQKETVEAA).

This sequence belongs to the GrpE family. Homodimer.

It localises to the cytoplasm. In terms of biological role, participates actively in the response to hyperosmotic and heat shock by preventing the aggregation of stress-denatured proteins, in association with DnaK and GrpE. It is the nucleotide exchange factor for DnaK and may function as a thermosensor. Unfolded proteins bind initially to DnaJ; upon interaction with the DnaJ-bound protein, DnaK hydrolyzes its bound ATP, resulting in the formation of a stable complex. GrpE releases ADP from DnaK; ATP binding to DnaK triggers the release of the substrate protein, thus completing the reaction cycle. Several rounds of ATP-dependent interactions between DnaJ, DnaK and GrpE are required for fully efficient folding. The protein is Protein GrpE of Photobacterium profundum (strain SS9).